We begin with the raw amino-acid sequence, 309 residues long: Calcium homeostasis modulator protein 5 (309 aa).

Topologically, residues 1–15 (MDAFQSILKFFLNQK) are cytoplasmic. A helical membrane pass occupies residues 16 to 37 (TAIGYSFMALLTVGSERLFSLV). A 1,2-diacyl-sn-glycero-3-phosphate is bound by residues Arg-32 and Val-37. At 38–45 (AFKCPCSV) the chain is on the extracellular side. Intrachain disulfides connect Cys-41/Cys-127, Cys-43/Cys-158, and Cys-142/Cys-149. Residues 46–70 (ENTAYGLVFLFAPAWVLLILGFFLN) traverse the membrane as a helical segment. Residues 71 to 99 (NKAWRLFTGCCMNPKKIFPRRRCCRFFYV) lie on the Cytoplasmic side of the membrane. A helical transmembrane segment spans residues 100–129 (LGHIILSSLVAPVMWLSVALLNGTFYECAM). Residue Asn-121 participates in a 1,2-diacyl-sn-glycero-3-phosphate binding. The Extracellular segment spans residues 130 to 174 (SGTRSTRLLEMICKGKPKECWEELHKVSCGKSSMAAMESEEVRLS). A helical membrane pass occupies residues 175-200 (LQAQSQILGWCLICSASFLSLLTTCY). The Cytoplasmic segment spans residues 201–309 (ARCRSKVSYL…MILVGTAQSL (109 aa)). A 1,2-diacyl-sn-glycero-3-phosphate is bound at residue Arg-202.

It belongs to the CALHM family. In terms of assembly, oligomerizes to form undecameric cone-shaped channels.

The protein resides in the membrane. Its function is as follows. May assemble to form large pore channels with gating and ion conductance likely regulated by membrane lipids. In Mus musculus (Mouse), this protein is Calcium homeostasis modulator protein 5.